A 168-amino-acid chain; its full sequence is Transcriptional regulator MraZ (168 aa).

SpoVT-AbrB domains lie at 8–51 (EYNQ…GGDR) and 90–140 (ALNM…KADT).

Belongs to the MraZ family. As to quaternary structure, forms oligomers.

It is found in the cytoplasm. It localises to the nucleoid. In Cereibacter sphaeroides (strain ATCC 17025 / ATH 2.4.3) (Rhodobacter sphaeroides), this protein is Transcriptional regulator MraZ.